We begin with the raw amino-acid sequence, 206 residues long: U-scoloptoxin(08)-Cw1a (206 aa).

The signal sequence occupies residues 1–24 (MIFRVNLLFSCFCFVLFVFDFSNA). A propeptide spanning residues 25–164 (SKYDQGSLNI…DLPELKRRKR (140 aa)) is cleaved from the precursor. The stretch at 37 to 43 (RLWRDWE) is one RLWRNWE 1; approximate repeat. Residues 71-77 (RLWRDWE) form an RLWRNWE 2; approximate repeat. The stretch at 104 to 110 (RLWRDWE) is one RLWRNWE 3; approximate repeat. One copy of the RLWRNWE 4 repeat lies at 137 to 143 (RLWRNWE). The stretch at 164 to 170 (RLWRNED) is one RLWRNWE 5; approximate repeat.

This sequence belongs to the scoloptoxin-08 family. In terms of processing, contains 3 disulfide bonds. Expressed by the venom gland.

Its subcellular location is the secreted. The sequence is that of U-scoloptoxin(08)-Cw1a from Cormocephalus westwoodi (Westwood's green centipede).